The sequence spans 425 residues: Glucose-6-phosphate 1-dehydrogenase (425 aa).

NADP(+)-binding residues include arginine 44 and lysine 135. Substrate is bound by residues histidine 165, lysine 169, glutamate 201, and aspartate 220. Histidine 225 (proton acceptor) is an active-site residue. Residue lysine 311 coordinates substrate.

The protein belongs to the glucose-6-phosphate dehydrogenase family.

The enzyme catalyses D-glucose 6-phosphate + NADP(+) = 6-phospho-D-glucono-1,5-lactone + NADPH + H(+). It participates in carbohydrate degradation; pentose phosphate pathway; D-ribulose 5-phosphate from D-glucose 6-phosphate (oxidative stage): step 1/3. Functionally, catalyzes the oxidation of glucose 6-phosphate to 6-phosphogluconolactone. This Helicobacter pylori (strain ATCC 700392 / 26695) (Campylobacter pylori) protein is Glucose-6-phosphate 1-dehydrogenase.